An 83-amino-acid polypeptide reads, in one-letter code: uncharacterized protein (83 aa).

A disordered region spans residues 58–83; it reads EHGHDDEYDEFSDPNAWVPRRSRDTG.

This is an uncharacterized protein from Mycobacterium tuberculosis (strain CDC 1551 / Oshkosh).